We begin with the raw amino-acid sequence, 95 residues long: Small ribosomal subunit protein bS18 (95 aa).

The protein belongs to the bacterial ribosomal protein bS18 family. Part of the 30S ribosomal subunit. Forms a tight heterodimer with protein bS6.

Functionally, binds as a heterodimer with protein bS6 to the central domain of the 16S rRNA, where it helps stabilize the platform of the 30S subunit. The chain is Small ribosomal subunit protein bS18 from Rickettsia canadensis (strain McKiel).